Consider the following 296-residue polypeptide: Urease accessory protein UreD (296 aa).

This sequence belongs to the UreD family. As to quaternary structure, ureD, UreF and UreG form a complex that acts as a GTP-hydrolysis-dependent molecular chaperone, activating the urease apoprotein by helping to assemble the nickel containing metallocenter of UreC. The UreE protein probably delivers the nickel.

It localises to the cytoplasm. In terms of biological role, required for maturation of urease via the functional incorporation of the urease nickel metallocenter. The sequence is that of Urease accessory protein UreD from Synechococcus sp. (strain CC9311).